The chain runs to 388 residues: 5-hydroxytryptamine receptor 4 (388 aa).

Residues 1–19 (MDKLDANVSSKEGFGSVEK) lie on the Extracellular side of the membrane. Asn-7 carries an N-linked (GlcNAc...) asparagine glycan. A helical transmembrane segment spans residues 20–44 (VVLLTFLSAVILMAILGNLLVMVAV). Topologically, residues 45–54 (CRDRQLRKIK) are cytoplasmic. The chain crosses the membrane as a helical span at residues 55–78 (TNYFIVSLAFADLLVSVLVMPFGA). The Extracellular portion of the chain corresponds to 79-92 (IELVQDIWVYGEMF). The helical transmembrane segment at 93–117 (CLVRTSLDVLLTTASIFHLCCISLD) threads the bilayer. The cysteines at positions 93 and 184 are disulfide-linked. Position 100 (Asp-100) interacts with serotonin. Residues 118–133 (RYYAICCQPLVYRNKM) are Cytoplasmic-facing. Residues 134 to 157 (TPLRIALMLGGCWVIPMFISFLPI) traverse the membrane as a helical segment. Over 158–188 (MQGWNNIGIVDLIEKRKFNQNSNSTYCVFMV) the chain is Extracellular. The helical transmembrane segment at 189–212 (NKPYAITCSVVAFYIPFLLMVLAY) threads the bilayer. The Cytoplasmic segment spans residues 213–257 (YRIYVTAKEHARQIQVLQRAGAPAEGRPQPADQHSTHRMRTETKA). Residues 258-283 (AKTLCIIMGCFCLCWAPFFVTNIVDP) form a helical membrane-spanning segment. Asn-279 contributes to the serotonin binding site. Residues 284–290 (FIDYTVP) are Extracellular-facing. A helical membrane pass occupies residues 291–314 (GQLWTAFLWLGYINSGLNPFLYAF). Residues 315 to 388 (LNKSFRRAFL…PLVAAQPIDT (74 aa)) are Cytoplasmic-facing.

It belongs to the G-protein coupled receptor 1 family. As to quaternary structure, interacts (via C-terminus 330-346 AA) with GRK5; this interaction is promoted by 5-HT (serotonin).

The protein localises to the cell membrane. The protein resides in the endosome membrane. Functionally, G-protein coupled receptor for 5-hydroxytryptamine (serotonin), a biogenic hormone that functions as a neurotransmitter, a hormone and a mitogen. Ligand binding causes a conformation change that triggers signaling via guanine nucleotide-binding proteins (G proteins) and modulates the activity of downstream effectors. HTR4 is coupled to G(s) G alpha proteins and mediates activation of adenylate cyclase activity. The polypeptide is 5-hydroxytryptamine receptor 4 (HTR4) (Cavia porcellus (Guinea pig)).